The sequence spans 364 residues: MQERHTEQDYRALLIADTPIIDVRAPIEFEQGAMPAAINLPLMNNDERAAVGTCYKQQGSDAALALGHKLVAGEIRQQRMDAWRAACLQNPQGILCCARGGQRSHIVQSWLHAAGIDYPLVEGGYKALRQTAIQATIELAQKPIVLIGGCTGSGKTLLVQQQPNGVDLEGLARHRGSAFGRTLQPQLSQASFENLLAAEMLKTDARQNLRLWVLEDESRMIGSNHLPECLRERMTQAAIAVVEDPFEIRLERLNEEYFLRMHHDFTHAYGDEQGWQEYCEYLHHGLSAIKRRLGLQRYNELAARLDAALTTQLTTGSTDGHLAWLVPLLEEYYDPMYRYQLEKKAEKVVFRGEWAEVAEWVKSR.

The Rhodanese domain occupies 14–137 (LIADTPIIDV…LRQTAIQATI (124 aa)). C97 functions as the S-selanylcysteine intermediate in the catalytic mechanism.

This sequence belongs to the SelU family. As to quaternary structure, monomer.

It carries out the reaction 5-methylaminomethyl-2-thiouridine(34) in tRNA + selenophosphate + (2E)-geranyl diphosphate + H2O + H(+) = 5-methylaminomethyl-2-selenouridine(34) in tRNA + (2E)-thiogeraniol + phosphate + diphosphate. The catalysed reaction is 5-methylaminomethyl-2-thiouridine(34) in tRNA + (2E)-geranyl diphosphate = 5-methylaminomethyl-S-(2E)-geranyl-thiouridine(34) in tRNA + diphosphate. It catalyses the reaction 5-methylaminomethyl-S-(2E)-geranyl-thiouridine(34) in tRNA + selenophosphate + H(+) = 5-methylaminomethyl-2-(Se-phospho)selenouridine(34) in tRNA + (2E)-thiogeraniol. The enzyme catalyses 5-methylaminomethyl-2-(Se-phospho)selenouridine(34) in tRNA + H2O = 5-methylaminomethyl-2-selenouridine(34) in tRNA + phosphate. Involved in the post-transcriptional modification of the uridine at the wobble position (U34) of tRNA(Lys), tRNA(Glu) and tRNA(Gln). Catalyzes the conversion of 2-thiouridine (S2U-RNA) to 2-selenouridine (Se2U-RNA). Acts in a two-step process involving geranylation of 2-thiouridine (S2U) to S-geranyl-2-thiouridine (geS2U) and subsequent selenation of the latter derivative to 2-selenouridine (Se2U) in the tRNA chain. The protein is tRNA 2-selenouridine synthase of Escherichia coli (strain SMS-3-5 / SECEC).